We begin with the raw amino-acid sequence, 824 residues long: Leucine--tRNA ligase (824 aa).

The short motif at 41 to 51 is the 'HIGH' region element; the sequence is PYPSGTLHVGH. A 'KMSKS' region motif is present at residues 580–584; that stretch reads KMSKS. Lys583 is an ATP binding site.

Belongs to the class-I aminoacyl-tRNA synthetase family.

The protein resides in the cytoplasm. It carries out the reaction tRNA(Leu) + L-leucine + ATP = L-leucyl-tRNA(Leu) + AMP + diphosphate. This is Leucine--tRNA ligase from Thermotoga petrophila (strain ATCC BAA-488 / DSM 13995 / JCM 10881 / RKU-1).